The following is a 169-amino-acid chain: 16S rRNA aminocarboxypropyltransferase (169 aa).

Positions 15, 65, 88, and 107 each coordinate S-adenosyl-L-methionine.

This sequence belongs to the TDD superfamily. TSR3 family.

It localises to the cytoplasm. It carries out the reaction an N(1)-methylpseudouridine in rRNA + S-adenosyl-L-methionine = N(1)-methyl-N(3)-[(3S)-3-amino-3-carboxypropyl]pseudouridine in rRNA + S-methyl-5'-thioadenosine + H(+). Functionally, aminocarboxypropyltransferase that catalyzes the aminocarboxypropyl transfer on pseudouridine corresponding to position 914 in M.jannaschii 16S rRNA. It constitutes the last step in biosynthesis of the hypermodified N1-methyl-N3-(3-amino-3-carboxypropyl) pseudouridine (m1acp3-Psi). The protein is 16S rRNA aminocarboxypropyltransferase of Methanopyrus kandleri (strain AV19 / DSM 6324 / JCM 9639 / NBRC 100938).